The primary structure comprises 328 residues: Probable D,D-dipeptide transport ATP-binding protein DdpD (328 aa).

An ABC transporter domain is found at 6-257 (LDIQQLHLSF…PRHPYTIGLL (252 aa)). 42-49 (GESGSGKS) is a binding site for ATP.

This sequence belongs to the ABC transporter superfamily. The complex is composed of two ATP-binding proteins (DdpD and DdpF), two transmembrane proteins (DdpB and DdpC) and a solute-binding protein (DdpA).

The protein localises to the cell inner membrane. Its function is as follows. Part of the ABC transporter complex DdpABCDF, which is probably involved in D,D-dipeptide transport. Probably responsible for energy coupling to the transport system. The protein is Probable D,D-dipeptide transport ATP-binding protein DdpD of Escherichia coli (strain K12).